Consider the following 220-residue polypeptide: Deoxyribose-phosphate aldolase 1 (220 aa).

The Proton donor/acceptor role is filled by Asp-89. The active-site Schiff-base intermediate with acetaldehyde is Lys-151. Residue Lys-180 is the Proton donor/acceptor of the active site.

Belongs to the DeoC/FbaB aldolase family. DeoC type 1 subfamily.

The protein localises to the cytoplasm. The catalysed reaction is 2-deoxy-D-ribose 5-phosphate = D-glyceraldehyde 3-phosphate + acetaldehyde. It participates in carbohydrate degradation; 2-deoxy-D-ribose 1-phosphate degradation; D-glyceraldehyde 3-phosphate and acetaldehyde from 2-deoxy-alpha-D-ribose 1-phosphate: step 2/2. In terms of biological role, catalyzes a reversible aldol reaction between acetaldehyde and D-glyceraldehyde 3-phosphate to generate 2-deoxy-D-ribose 5-phosphate. The protein is Deoxyribose-phosphate aldolase 1 of Staphylococcus aureus (strain MRSA252).